We begin with the raw amino-acid sequence, 331 residues long: tRNA-cytidine(32) 2-sulfurtransferase (331 aa).

The interval 1 to 33 (MNAPHMNDTAADAATLDDAAAPAGRPALTRREQ) is disordered. Residues 8 to 23 (DTAADAATLDDAAAPA) show a composition bias toward low complexity. The PP-loop motif signature appears at 71 to 76 (SGGKDS). [4Fe-4S] cluster-binding residues include Cys-146, Cys-149, and Cys-237.

This sequence belongs to the TtcA family. In terms of assembly, homodimer. Mg(2+) is required as a cofactor. Requires [4Fe-4S] cluster as cofactor.

The protein localises to the cytoplasm. It carries out the reaction cytidine(32) in tRNA + S-sulfanyl-L-cysteinyl-[cysteine desulfurase] + AH2 + ATP = 2-thiocytidine(32) in tRNA + L-cysteinyl-[cysteine desulfurase] + A + AMP + diphosphate + H(+). The protein operates within tRNA modification. In terms of biological role, catalyzes the ATP-dependent 2-thiolation of cytidine in position 32 of tRNA, to form 2-thiocytidine (s(2)C32). The sulfur atoms are provided by the cysteine/cysteine desulfurase (IscS) system. The polypeptide is tRNA-cytidine(32) 2-sulfurtransferase (Burkholderia cenocepacia (strain HI2424)).